Reading from the N-terminus, the 195-residue chain is HTH-type transcriptional regulator BetI (195 aa).

In terms of domain architecture, HTH tetR-type spans 8 to 68 (PIRRQQLIEA…ATMRYLISHL (61 aa)). Positions 31 to 50 (SIVQIARRAGVSNGIISHYF) form a DNA-binding region, H-T-H motif.

The protein operates within amine and polyamine biosynthesis; betaine biosynthesis via choline pathway [regulation]. Its function is as follows. Repressor involved in the biosynthesis of the osmoprotectant glycine betaine. It represses transcription of the choline transporter BetT and the genes of BetAB involved in the synthesis of glycine betaine. The sequence is that of HTH-type transcriptional regulator BetI from Pectobacterium atrosepticum (strain SCRI 1043 / ATCC BAA-672) (Erwinia carotovora subsp. atroseptica).